We begin with the raw amino-acid sequence, 643 residues long: 3D-(3,5/4)-trihydroxycyclohexane-1,2-dione hydrolase (643 aa).

Glu-65 provides a ligand contact to thiamine diphosphate. The segment at 441 to 521 is thiamine pyrophosphate binding; the sequence is SLPGDLQRMW…VNVLLFDNCG (81 aa). Residues Asp-492 and Asn-519 each contribute to the Mg(2+) site.

Belongs to the TPP enzyme family. The cofactor is Mg(2+). Requires thiamine diphosphate as cofactor.

The catalysed reaction is 3D-3,5/4-trihydroxycyclohexane-1,2-dione + H2O = 5-deoxy-D-glucuronate + H(+). Its pathway is polyol metabolism; myo-inositol degradation into acetyl-CoA; acetyl-CoA from myo-inositol: step 3/7. In terms of biological role, involved in the cleavage of the C1-C2 bond of 3D-(3,5/4)-trihydroxycyclohexane-1,2-dione (THcHDO) to yield 5-deoxy-glucuronate (5DG). The chain is 3D-(3,5/4)-trihydroxycyclohexane-1,2-dione hydrolase from Clostridium botulinum (strain Alaska E43 / Type E3).